A 339-amino-acid chain; its full sequence is Phenylalanine--tRNA ligase alpha subunit (339 aa).

Glutamate 254 is a Mg(2+) binding site.

The protein belongs to the class-II aminoacyl-tRNA synthetase family. Phe-tRNA synthetase alpha subunit type 1 subfamily. As to quaternary structure, tetramer of two alpha and two beta subunits. Mg(2+) serves as cofactor.

The protein localises to the cytoplasm. It catalyses the reaction tRNA(Phe) + L-phenylalanine + ATP = L-phenylalanyl-tRNA(Phe) + AMP + diphosphate + H(+). The protein is Phenylalanine--tRNA ligase alpha subunit (pheS) of Chlamydia pneumoniae (Chlamydophila pneumoniae).